We begin with the raw amino-acid sequence, 459 residues long: Putative peroxisome assembly protein 12 (459 aa).

The Peroxisomal matrix segment spans residues 1–16 (MFMFNFDNGHDPNRPS). Residues 17-44 (FFEMLNQHQMMPSFKPALKYIFTVLSQR) form a helical membrane-spanning segment. Over 45–47 (NPK) the chain is Cytoplasmic. A helical transmembrane segment spans residues 48-72 (FRYIVNYYDECFYSLLLLLEYHYLK). Over 73 to 158 (YYEGSFSENF…AKDDLNTMIQ (86 aa)) the chain is Peroxisomal matrix. The chain crosses the membrane as a helical span at residues 159-196 (DSDRKESLIYLVLIPYFKGKLDEYYKKESDPLAELGLV). At 197-248 (SSDNNNNNNDNINDQIQQLEEQIQQQQTIVNGNNNSNNNNKKLKIKFLILIR) the chain is on the cytoplasmic side. A helical transmembrane segment spans residues 249–287 (FLKGSKTLKKLKTIFLKVYPFISAIYEALFFIYQLLYLY). Over 288 to 355 (EYTNYYTPFF…LDSILDYSKY (68 aa)) the chain is Peroxisomal matrix. Residues 356–380 (ILPLSVFIFKSLEWWYSENRISAPT) form a helical membrane-spanning segment. Topologically, residues 381-459 (LPIPTPPTPS…EQLRKIYETV (79 aa)) are cytoplasmic. Zn(2+) contacts are provided by Cys-406, Cys-409, Cys-426, and Cys-429. An RING-type; degenerate zinc finger spans residues 406–444 (CPLCLKERTNPTICGSGFVFCYPCIFGYVNEHSKCPITF).

It belongs to the pex2/pex10/pex12 family. As to quaternary structure, component of the PEX2-PEX10-PEX12 retrotranslocation channel.

It localises to the peroxisome membrane. It participates in protein modification; protein ubiquitination. Functionally, component of a retrotranslocation channel required for peroxisome organization by mediating export of the PEX5 receptor from peroxisomes to the cytosol, thereby promoting PEX5 recycling. The retrotranslocation channel is composed of PEX2, PEX10 and PEX12; each subunit contributing transmembrane segments that coassemble into an open channel that specifically allows the passage of PEX5 through the peroxisomal membrane. PEX12 also regulates PEX5 recycling by activating the E3 ubiquitin-protein ligase activity of PEX10. When PEX5 recycling is compromised, PEX12 stimulates PEX10-mediated polyubiquitination of PEX5, leading to its subsequent degradation. This Dictyostelium discoideum (Social amoeba) protein is Putative peroxisome assembly protein 12 (pex12).